Here is a 242-residue protein sequence, read N- to C-terminus: Uridylate kinase (242 aa).

16-19 provides a ligand contact to ATP; the sequence is KVSG. Gly-58 provides a ligand contact to UMP. Positions 59 and 63 each coordinate ATP. UMP contacts are provided by residues Asp-78 and 139 to 146; that span reads TGNPFCTT. ATP is bound by residues Thr-166, Gln-167, Tyr-172, and Asp-175.

This sequence belongs to the UMP kinase family. As to quaternary structure, homohexamer.

Its subcellular location is the cytoplasm. It catalyses the reaction UMP + ATP = UDP + ADP. It participates in pyrimidine metabolism; CTP biosynthesis via de novo pathway; UDP from UMP (UMPK route): step 1/1. Inhibited by UTP. Functionally, catalyzes the reversible phosphorylation of UMP to UDP. In Rickettsia conorii (strain ATCC VR-613 / Malish 7), this protein is Uridylate kinase.